The chain runs to 30 residues: Root cyclotide 1 (30 aa).

The cyclopeptide (Gly-Asn) cross-link spans 1–30 (GIPCAESCVWIPCTVTALLGCSCSNKVCYN). 3 disulfide bridges follow: C4/C21, C8/C23, and C13/C28.

In terms of processing, this is a cyclic peptide. As to expression, expressed in roots.

Its function is as follows. Probably participates in a plant defense mechanism. The polypeptide is Root cyclotide 1 (Viola hederacea (Australian violet)).